The following is a 372-amino-acid chain: B2 bradykinin receptor (372 aa).

At 1-34 the chain is on the extracellular side; sequence MFNITSQVSALNATLAQGNSCLDAEWWSWLNTIQ. Asparagine 3 and asparagine 12 each carry an N-linked (GlcNAc...) asparagine glycan. A helical membrane pass occupies residues 35 to 58; sequence APFLWVLFVLAVLENIFVLSVFFL. At 59-67 the chain is on the cytoplasmic side; the sequence is HKSSCTVAE. A helical transmembrane segment spans residues 68–92; that stretch reads IYLGNLAVADLILAFGLPFWAITIA. Topologically, residues 93–105 are extracellular; the sequence is NNFDWLFGEVLCR. A disulfide bridge connects residues cysteine 104 and cysteine 185. A helical transmembrane segment spans residues 106–127; the sequence is MVNTMIQMNMYSSICFLMLVSI. Residues 128 to 149 are Cytoplasmic-facing; that stretch reads DRYLALVKTMSMGRMRGVRWAK. A Phosphotyrosine modification is found at tyrosine 130. Residues 150–172 form a helical membrane-spanning segment; the sequence is LYSLVIWGCALLLSSPMLVFRTM. The Extracellular portion of the chain corresponds to 173–195; it reads KDYRDEGHNVTACLIIYPSLTWQ. A glycan (N-linked (GlcNAc...) asparagine) is linked at asparagine 181. The chain crosses the membrane as a helical span at residues 196–222; the sequence is VFTNVLLNLVGFLLPLSIITFCTVQIM. Residues 223–241 lie on the Cytoplasmic side of the membrane; that stretch reads QVLRNNEMQKFKEIQTERR. Residues 242 to 266 form a helical membrane-spanning segment; the sequence is ATVLVLAVLLLFVVCWLPFQIGTFL. Residues 267–284 lie on the Extracellular side of the membrane; that stretch reads DTLRLLGFLPGCWEHVID. The chain crosses the membrane as a helical span at residues 285–308; the sequence is LITQISSYLAYSNSCLNPLVYVIV. Residues 309–364 are Cytoplasmic-facing; sequence GKRFRKKSREVYHGLCRSGGCVSEPAQSENSMGTLRTSISVDRQIHKLQDWARSSS. Tyrosine 320 carries the post-translational modification Phosphotyrosine. Cysteine 324 carries S-palmitoyl cysteine lipidation. Phosphoserine is present on serine 339. Threonine 342 carries the phosphothreonine modification. Serine 346 and serine 348 each carry phosphoserine; by GRK6.

Belongs to the G-protein coupled receptor 1 family. Bradykinin receptor subfamily. BDKRB2 sub-subfamily. As to quaternary structure, forms a complex with PECAM1 and GNAQ. Interacts with PECAM1.

The protein resides in the cell membrane. Functionally, receptor for bradykinin. It is associated with G proteins that activate a phosphatidylinositol-calcium second messenger system. The chain is B2 bradykinin receptor (BDKRB2) from Cavia porcellus (Guinea pig).